The sequence spans 912 residues: Phosphoenolpyruvate carboxylase (912 aa).

Residues His-138 and Lys-575 contribute to the active site.

This sequence belongs to the PEPCase type 1 family. The cofactor is Mg(2+).

The catalysed reaction is oxaloacetate + phosphate = phosphoenolpyruvate + hydrogencarbonate. In terms of biological role, forms oxaloacetate, a four-carbon dicarboxylic acid source for the tricarboxylic acid cycle. The protein is Phosphoenolpyruvate carboxylase of Lactobacillus acidophilus (strain ATCC 700396 / NCK56 / N2 / NCFM).